Consider the following 152-residue polypeptide: SsrA-binding protein (152 aa).

This sequence belongs to the SmpB family.

The protein resides in the cytoplasm. In terms of biological role, required for rescue of stalled ribosomes mediated by trans-translation. Binds to transfer-messenger RNA (tmRNA), required for stable association of tmRNA with ribosomes. tmRNA and SmpB together mimic tRNA shape, replacing the anticodon stem-loop with SmpB. tmRNA is encoded by the ssrA gene; the 2 termini fold to resemble tRNA(Ala) and it encodes a 'tag peptide', a short internal open reading frame. During trans-translation Ala-aminoacylated tmRNA acts like a tRNA, entering the A-site of stalled ribosomes, displacing the stalled mRNA. The ribosome then switches to translate the ORF on the tmRNA; the nascent peptide is terminated with the 'tag peptide' encoded by the tmRNA and targeted for degradation. The ribosome is freed to recommence translation, which seems to be the essential function of trans-translation. This is SsrA-binding protein from Rickettsia canadensis (strain McKiel).